A 383-amino-acid chain; its full sequence is Succinyl-diaminopimelate desuccinylase (383 aa).

His74 provides a ligand contact to Zn(2+). Asp76 is an active-site residue. Asp107 is a Zn(2+) binding site. Glu141 (proton acceptor) is an active-site residue. Zn(2+) contacts are provided by Glu142, Glu170, and His356.

Belongs to the peptidase M20A family. DapE subfamily. In terms of assembly, homodimer. Zn(2+) is required as a cofactor. It depends on Co(2+) as a cofactor.

The enzyme catalyses N-succinyl-(2S,6S)-2,6-diaminopimelate + H2O = (2S,6S)-2,6-diaminopimelate + succinate. Its pathway is amino-acid biosynthesis; L-lysine biosynthesis via DAP pathway; LL-2,6-diaminopimelate from (S)-tetrahydrodipicolinate (succinylase route): step 3/3. Functionally, catalyzes the hydrolysis of N-succinyl-L,L-diaminopimelic acid (SDAP), forming succinate and LL-2,6-diaminopimelate (DAP), an intermediate involved in the bacterial biosynthesis of lysine and meso-diaminopimelic acid, an essential component of bacterial cell walls. The polypeptide is Succinyl-diaminopimelate desuccinylase (Cupriavidus necator (strain ATCC 17699 / DSM 428 / KCTC 22496 / NCIMB 10442 / H16 / Stanier 337) (Ralstonia eutropha)).